The sequence spans 200 residues: Outer-membrane lipoprotein LolB (200 aa).

Residues 1–18 (MRRGRLLIAGLAALVLSA) form the signal peptide. Cys19 carries the N-palmitoyl cysteine lipid modification. Cys19 carries S-diacylglycerol cysteine lipidation.

It belongs to the LolB family. In terms of assembly, monomer.

Its subcellular location is the cell outer membrane. In terms of biological role, plays a critical role in the incorporation of lipoproteins in the outer membrane after they are released by the LolA protein. The protein is Outer-membrane lipoprotein LolB of Alkalilimnicola ehrlichii (strain ATCC BAA-1101 / DSM 17681 / MLHE-1).